A 443-amino-acid polypeptide reads, in one-letter code: D-serine dehydratase (443 aa).

An N6-(pyridoxal phosphate)lysine modification is found at Lys-118.

This sequence belongs to the serine/threonine dehydratase family. DsdA subfamily. As to quaternary structure, monomer. The cofactor is pyridoxal 5'-phosphate.

It catalyses the reaction D-serine = pyruvate + NH4(+). This is D-serine dehydratase from Yersinia enterocolitica serotype O:8 / biotype 1B (strain NCTC 13174 / 8081).